Reading from the N-terminus, the 273-residue chain is HMP-PP phosphatase (273 aa).

Residue D8 is the Nucleophile of the active site. Mg(2+) contacts are provided by D8, D10, and D212.

This sequence belongs to the HAD-like hydrolase superfamily. Cof family. Requires Mg(2+) as cofactor.

It catalyses the reaction 4-amino-2-methyl-5-(diphosphooxymethyl)pyrimidine + H2O = 4-amino-2-methyl-5-(phosphooxymethyl)pyrimidine + phosphate + H(+). Catalyzes the hydrolysis of 4-amino-2-methyl-5-hydroxymethylpyrimidine pyrophosphate (HMP-PP) to 4-amino-2-methyl-5-hydroxymethylpyrimidine phosphate (HMP-P). The protein is HMP-PP phosphatase of Yersinia pseudotuberculosis serotype O:1b (strain IP 31758).